The primary structure comprises 293 residues: 33 kDa chaperonin (293 aa).

Intrachain disulfides connect cysteine 235–cysteine 237 and cysteine 267–cysteine 270.

The protein belongs to the HSP33 family. Post-translationally, under oxidizing conditions two disulfide bonds are formed involving the reactive cysteines. Under reducing conditions zinc is bound to the reactive cysteines and the protein is inactive.

It localises to the cytoplasm. Functionally, redox regulated molecular chaperone. Protects both thermally unfolding and oxidatively damaged proteins from irreversible aggregation. Plays an important role in the bacterial defense system toward oxidative stress. This chain is 33 kDa chaperonin, found in Deinococcus radiodurans (strain ATCC 13939 / DSM 20539 / JCM 16871 / CCUG 27074 / LMG 4051 / NBRC 15346 / NCIMB 9279 / VKM B-1422 / R1).